Reading from the N-terminus, the 114-residue chain is Putative movement protein (114 aa).

The chain crosses the membrane as a helical span at residues 27 to 47 (LIGIILLVTVCLTVLWVCIML). The interval 79 to 114 (RTPFEATGPERERNWEARRQSTTVNPASQPNTGSVF) is disordered. Residues 86–97 (GPERERNWEARR) show a composition bias toward basic and acidic residues. The span at 98–114 (QSTTVNPASQPNTGSVF) shows a compositional bias: polar residues.

The protein belongs to the nanovirus movement protein family.

It localises to the host cell membrane. In terms of biological role, may transport viral genome to neighboring plant cells directly through plasmosdesmata, without any budding. The movement protein allows efficient cell to cell propagation, by bypassing the host cell wall barrier. This Faba bean necrotic yellows virus (isolate Egyptian EV1-93) (FBNYV) protein is Putative movement protein (DNA-M).